The sequence spans 368 residues: 3-dehydroquinate synthase (368 aa).

NAD(+) contacts are provided by residues 76–81 (DGEQYK), 110–114 (GVIGD), 134–135 (TT), lysine 147, lysine 156, and 174–177 (CLKT). Zn(2+) contacts are provided by glutamate 189, histidine 252, and histidine 269.

The protein belongs to the sugar phosphate cyclases superfamily. Dehydroquinate synthase family. The cofactor is NAD(+). Co(2+) is required as a cofactor. It depends on Zn(2+) as a cofactor.

The protein localises to the cytoplasm. The catalysed reaction is 7-phospho-2-dehydro-3-deoxy-D-arabino-heptonate = 3-dehydroquinate + phosphate. It functions in the pathway metabolic intermediate biosynthesis; chorismate biosynthesis; chorismate from D-erythrose 4-phosphate and phosphoenolpyruvate: step 2/7. Functionally, catalyzes the conversion of 3-deoxy-D-arabino-heptulosonate 7-phosphate (DAHP) to dehydroquinate (DHQ). In Vibrio vulnificus (strain YJ016), this protein is 3-dehydroquinate synthase.